The chain runs to 737 residues: Dynein axonemal intermediate chain 7 homolog (737 aa).

Residues 1 to 15 (MPPKSPNRSGKSTPT) show a composition bias toward polar residues. Disordered regions lie at residues 1–61 (MPPK…ERRA), 274–362 (KKVK…DDEE), and 410–452 (STVK…QQPP). 3 stretches are compositionally biased toward basic and acidic residues: residues 18–61 (RPGE…ERRA), 276–316 (VKDE…EGRQ), and 333–349 (EETKKDENEGEKEDAVK). Composition is skewed to polar residues over residues 417-429 (DNPNTGRSSSRVA) and 441-451 (PSKTPLEQQQP).

The protein belongs to the DNAI7 family.

This is Dynein axonemal intermediate chain 7 homolog (AXP83.9) from Ciona intestinalis (Transparent sea squirt).